Reading from the N-terminus, the 501-residue chain is L-arabinose isomerase (501 aa).

Residues glutamate 306, glutamate 333, histidine 350, and histidine 450 each contribute to the Mn(2+) site.

This sequence belongs to the arabinose isomerase family. In terms of assembly, homohexamer. Requires Mn(2+) as cofactor.

The enzyme catalyses beta-L-arabinopyranose = L-ribulose. The protein operates within carbohydrate degradation; L-arabinose degradation via L-ribulose; D-xylulose 5-phosphate from L-arabinose (bacterial route): step 1/3. Its function is as follows. Catalyzes the conversion of L-arabinose to L-ribulose. This Erwinia tasmaniensis (strain DSM 17950 / CFBP 7177 / CIP 109463 / NCPPB 4357 / Et1/99) protein is L-arabinose isomerase.